Here is a 545-residue protein sequence, read N- to C-terminus: Probable zinc metalloprotease EGY2, chloroplastic (545 aa).

The N-terminal 63 residues, 1-63 (MQLPAMSCSP…QIRNRRFVCQ (63 aa)), are a transit peptide targeting the chloroplast. The segment at 66-142 (TETEPDGDGN…DATPASDAQE (77 aa)) is disordered. A compositionally biased stretch (acidic residues) spans 68 to 85 (TEPDGDGNGDEEKEELGD). Composition is skewed to polar residues over residues 88–109 (SSPS…TNAD) and 117–129 (NTEP…TVQN). 7 consecutive transmembrane segments (helical) span residues 256 to 276 (AVPE…TLLL), 300 to 320 (VYGA…HILA), 325 to 345 (GIKL…FGAI), 363 to 383 (AAGP…GFIL), 426 to 446 (PLVL…IPAG), 473 to 493 (LLGI…LIFF), and 513 to 533 (YISI…PYPF).

This sequence belongs to the peptidase M50B family.

The protein localises to the plastid. Its subcellular location is the chloroplast membrane. Its function is as follows. Probable membrane-associated metalloprotease that may be involved in chloroplast development. The polypeptide is Probable zinc metalloprotease EGY2, chloroplastic (EGY2) (Oryza sativa subsp. indica (Rice)).